Consider the following 416-residue polypeptide: Peptide chain release factor subunit 1 (416 aa).

The protein belongs to the eukaryotic release factor 1 family. In terms of assembly, heterodimer of two subunits, one of which binds GTP.

It is found in the cytoplasm. In terms of biological role, directs the termination of nascent peptide synthesis (translation) in response to the termination codons UAA, UAG and UGA. This Haloquadratum walsbyi (strain DSM 16790 / HBSQ001) protein is Peptide chain release factor subunit 1.